A 154-amino-acid chain; its full sequence is Transcriptional repressor NrdR (154 aa).

The segment at cysteine 3 to cysteine 34 is a zinc-finger region. The 91-residue stretch at proline 49 to aspartate 139 folds into the ATP-cone domain.

The protein belongs to the NrdR family. The cofactor is Zn(2+).

Its function is as follows. Negatively regulates transcription of bacterial ribonucleotide reductase nrd genes and operons by binding to NrdR-boxes. The polypeptide is Transcriptional repressor NrdR (Neisseria meningitidis serogroup A / serotype 4A (strain DSM 15465 / Z2491)).